We begin with the raw amino-acid sequence, 473 residues long: Probable acid phosphatase DDB_G0284755 (473 aa).

Catalysis depends on His-94, which acts as the Nucleophile. The active-site Proton donor is Asp-359.

This sequence belongs to the histidine acid phosphatase family.

It carries out the reaction a phosphate monoester + H2O = an alcohol + phosphate. This Dictyostelium discoideum (Social amoeba) protein is Probable acid phosphatase DDB_G0284755.